Here is a 321-residue protein sequence, read N- to C-terminus: Malate dehydrogenase (321 aa).

NAD(+) contacts are provided by residues 10–15 (GAGQIG) and Asp34. 2 residues coordinate substrate: Arg83 and Arg89. NAD(+)-binding positions include Asn96 and 119–121 (VTN). Positions 121 and 152 each coordinate substrate. His176 (proton acceptor) is an active-site residue.

Belongs to the LDH/MDH superfamily. MDH type 3 family.

The catalysed reaction is (S)-malate + NAD(+) = oxaloacetate + NADH + H(+). In terms of biological role, catalyzes the reversible oxidation of malate to oxaloacetate. The sequence is that of Malate dehydrogenase from Azorhizobium caulinodans (strain ATCC 43989 / DSM 5975 / JCM 20966 / LMG 6465 / NBRC 14845 / NCIMB 13405 / ORS 571).